The primary structure comprises 1173 residues: WASH complex subunit 4 (1173 aa).

An N-acetylalanine modification is found at Ala2. Ser7 carries the phosphoserine modification. Positions 27–56 (QLKNYGRFLEEYTSQLRRIEDALDDLIGDV) form a coiled coil. The interval 705–1173 (KDLALFFSLN…STVSADPVVK (469 aa)) is sufficient for interaction with WASHC5. Residues 1141 to 1155 (AEENQEKKEKEEETK) show a composition bias toward basic and acidic residues. Residues 1141–1173 (AEENQEKKEKEEETKTSNGDGPESTVSADPVVK) are disordered. Residue Thr1154 is modified to Phosphothreonine.

Belongs to the SWIP family. As to quaternary structure, component of the WASH core complex also described as WASH regulatory complex (SHRC) composed of WASH (WASHC1, WASH2P or WASH3P), WASHC2 (WASHC2A or WASHC2C), WASHC3, WASHC4 and WASHC5. The WASH core complex associates via WASHC2 with the F-actin-capping protein dimer (formed by CAPZA1, CAPZA2 or CAPZA3 and CAPZB) in a transient or substoichiometric manner which was initially described as WASH complex.

It is found in the early endosome. Acts as a component of the WASH core complex that functions as a nucleation-promoting factor (NPF) at the surface of endosomes, where it recruits and activates the Arp2/3 complex to induce actin polymerization, playing a key role in the fission of tubules that serve as transport intermediates during endosome sorting. This Mus musculus (Mouse) protein is WASH complex subunit 4.